A 1029-amino-acid chain; its full sequence is Multiple C2 domain and transmembrane region protein 6 (1029 aa).

A C2 1 domain is found at 1 to 111 (MNKLVVEIVD…SGVQRYPLDK (111 aa)). The segment at 187–224 (TKKKEKESRTFHSIGAHAGGGGGAPPMSQAKQAYPPPP) is disordered. C2 domains lie at 277 to 398 (RSSG…PQWY), 437 to 562 (RVSH…PRWF), and 605 to 727 (FSSD…THFY). Aspartate 310, aspartate 316, aspartate 363, aspartate 365, and aspartate 371 together coordinate Ca(2+). Transmembrane regions (helical) follow at residues 864–884 (LILVCYPELILPTVFLYLFVI) and 976–996 (FALIWAVFIYVTPFQVIAIII).

It belongs to the MCTP family. Requires Ca(2+) as cofactor. As to expression, expressed in the vascular tissues of cotyledons and rosette leaves. Accumulates in roots caps and shoot apical meristems (SAMs). Observed in flowers.

The protein resides in the cell membrane. It is found in the cytoplasm. It localises to the endosome membrane. Its function is as follows. Regulates flowering time under long days. May function as a signaling molecule by regulating the trafficking of other regulators. The chain is Multiple C2 domain and transmembrane region protein 6 from Arabidopsis thaliana (Mouse-ear cress).